Consider the following 179-residue polypeptide: Phosphopantetheine adenylyltransferase (179 aa).

Serine 23 contributes to the substrate binding site. ATP is bound by residues 23-24 (SF) and histidine 31. Substrate-binding residues include lysine 55, alanine 87, and arginine 101. ATP contacts are provided by residues 102-104 (GIR), glutamate 112, and 137-143 (FAHVSSS).

Belongs to the bacterial CoaD family. Homohexamer. Requires Mg(2+) as cofactor.

It is found in the cytoplasm. The enzyme catalyses (R)-4'-phosphopantetheine + ATP + H(+) = 3'-dephospho-CoA + diphosphate. The protein operates within cofactor biosynthesis; coenzyme A biosynthesis; CoA from (R)-pantothenate: step 4/5. Its function is as follows. Reversibly transfers an adenylyl group from ATP to 4'-phosphopantetheine, yielding dephospho-CoA (dPCoA) and pyrophosphate. The polypeptide is Phosphopantetheine adenylyltransferase (Rhodopirellula baltica (strain DSM 10527 / NCIMB 13988 / SH1)).